The following is a 1154-amino-acid chain: Polyketide biosynthesis protein ThaF (1154 aa).

An acyl transferase region spans residues 330 to 714; the sequence is MHAFLFPGQG…TNGIAPAARV (385 aa). A disordered region spans residues 627 to 689; sequence SAVAASAPPR…PAPAPAPAPA (63 aa). Residues 641 to 672 are compositionally biased toward low complexity; it reads ADAQPPAASPARAATAASTMPPASASASASAP. The segment covering 673–689 has biased composition (pro residues); the sequence is APAPAPAPAPAPAPAPA.

The protein in the N-terminal section; belongs to the FabD family.

Its subcellular location is the cytoplasm. The enzyme catalyses holo-[ACP] + malonyl-CoA = malonyl-[ACP] + CoA. It participates in antibiotic biosynthesis. In terms of biological role, involved in production of the polyketide antibiotic thailandamide. Probably has an acyl transferase activity and could also have a flavin mononucleotide-dependent oxidoreductase activity. This chain is Polyketide biosynthesis protein ThaF, found in Burkholderia thailandensis (strain ATCC 700388 / DSM 13276 / CCUG 48851 / CIP 106301 / E264).